We begin with the raw amino-acid sequence, 70 residues long: Turripeptide Gsp9.3 (70 aa).

Positions 1-20 (MKVYCLLLVLLVGLVSQAHG) are cleaved as a signal peptide. One can recognise a Kazal-like domain in the interval 21–70 (QLDKKCQMVCTFDYRPVCGSDGRTYPNKCTLTSTACMSQRSITVFHDGEC). Intrachain disulfides connect C26–C56, C30–C49, and C38–C70.

Belongs to the conopeptide P-like superfamily. Expressed by the venom duct.

The protein localises to the secreted. Functionally, acts as a neurotoxin by inhibiting an ion channel. May also act as a serine protease inhibitor, since it possess the kazal serine protease inhibitor signature. The protein is Turripeptide Gsp9.3 of Gemmula speciosa (Splendid gem-turris).